The primary structure comprises 238 residues: RAD9, HUS1, RAD1-interacting nuclear orphan protein 1 (238 aa).

The segment covering 1–10 (MPPRKKRRQP) has biased composition (basic residues). The disordered stretch occupies residues 1–31 (MPPRKKRRQPSQKAPLLFHQQPLEGPKHSCA). Serine 51 bears the Phosphoserine; by PLK1 mark. Residues 55–61 (SWVSPDF) carry the RAD1-binding motif motif. The interval 74–105 (KHQNRARHSSRKPTTSKFPHLTFESPQSSSSE) is disordered. A compositionally biased stretch (basic residues) spans 75 to 84 (HQNRARHSSR). A D-box motif is present at residues 125–132 (RRPLVPVL). Positions 174 to 178 (QKENS) match the KEN box motif.

As to quaternary structure, interacts (when phosphorylated by PLK1) with POLQ; promoting POLQ recruitment to DNA damage sites. Interacts with RAD1; interaction is direct and promotes association with the 9-1-1 (RAD9-RAD1-HUS1) complex. Interacts with RAD18. Interacts with TOPBP1. Interacts with UBE2N. Phosphorylated at Ser-51 by PLK1, promoting interaction with polymerase theta (POLQ). Post-translationally, ubiquitinated and degraded by the APC/C complex upon mitotic exit. In terms of tissue distribution, weakly expressed in testis, prostate, ovary, thymus and small intestine. Expressed strongly in breast cancer cells.

Its subcellular location is the nucleus. The protein resides in the chromosome. Involved in microhomology-mediated end-joining (MMEJ) DNA repair by promoting recruitment of polymerase theta (POLQ) to DNA damage sites during mitosis. MMEJ is an alternative non-homologous end-joining (NHEJ) machinery that takes place during mitosis to repair double-strand breaks in DNA that originate in S-phase. Accumulates in M-phase; following phosphorylation by PLK1, interacts with POLQ, enabling its recruitment to double-strand breaks for subsequent repair. Also involved in the DNA damage response (DDR) signaling in response to genotoxic stresses such as ionizing radiation (IR) during the S phase. Recruited to sites of DNA damage through interaction with the 9-1-1 cell-cycle checkpoint response complex and TOPBP1 in a ATR-dependent manner. Required for the progression of the G1 to S phase transition. Plays a role in the stimulation of CHEK1 phosphorylation. This is RAD9, HUS1, RAD1-interacting nuclear orphan protein 1 from Homo sapiens (Human).